Consider the following 91-residue polypeptide: UPF0250 protein Psyr_4360 (91 aa).

Belongs to the UPF0250 family.

This chain is UPF0250 protein Psyr_4360, found in Pseudomonas syringae pv. syringae (strain B728a).